The primary structure comprises 218 residues: MRLKNKPWANELVEEHPESALDRPDPAEKIDWEARFGNDKPIEIEVGSGKGQFITTLAKQHPDRNFVAMEIQKTAAGIILKKKLDEGLDNLQILCADAANLVAYFGENSTSKIYLNFSDPWPKSRHEKRRLTYKDFLAKYQAVLTGDGLIEFKTDNSGLFAYSVKSMNNYGMHFDFMSVDLHHESEEIVEKNVETEYEHKFASKGQPIYCLHAGFLAK.

Positions 1 to 26 (MRLKNKPWANELVEEHPESALDRPDP) are disordered. Basic and acidic residues predominate over residues 13–26 (VEEHPESALDRPDP). Residues Glu-45, Glu-70, Asp-97, and Asp-119 each coordinate S-adenosyl-L-methionine. The active site involves Asp-119. Lys-123 lines the substrate pocket. The interval 125-130 (RHEKRR) is interaction with RNA. Residues Asp-155 and 195 to 198 (TEYE) contribute to the substrate site.

Belongs to the class I-like SAM-binding methyltransferase superfamily. TrmB family.

The catalysed reaction is guanosine(46) in tRNA + S-adenosyl-L-methionine = N(7)-methylguanosine(46) in tRNA + S-adenosyl-L-homocysteine. The protein operates within tRNA modification; N(7)-methylguanine-tRNA biosynthesis. Functionally, catalyzes the formation of N(7)-methylguanine at position 46 (m7G46) in tRNA. The polypeptide is tRNA (guanine-N(7)-)-methyltransferase (Lactobacillus delbrueckii subsp. bulgaricus (strain ATCC 11842 / DSM 20081 / BCRC 10696 / JCM 1002 / NBRC 13953 / NCIMB 11778 / NCTC 12712 / WDCM 00102 / Lb 14)).